We begin with the raw amino-acid sequence, 74 residues long: Conotoxin ca17a (74 aa).

The signal sequence occupies residues 1-20 (MQKATVLLLALLLLLPLSTA). Positions 21-40 (QDAEGSQEDAAQREVDIATR) are excised as a propeptide. At Pro51 the chain carries 4-hydroxyproline.

Post-translationally, contains disulfide bonds. In terms of tissue distribution, expressed by the venom gland.

Its subcellular location is the secreted. The sequence is that of Conotoxin ca17a from Conus caracteristicus (Characteristic cone).